The sequence spans 235 residues: Orotidine 5'-phosphate decarboxylase (235 aa).

Substrate is bound by residues Asp11, Lys33, 60-69 (DLKFHDIPNT), Thr119, Arg180, Gln189, Gly209, and Arg210. The Proton donor role is filled by Lys62.

Belongs to the OMP decarboxylase family. Type 1 subfamily. In terms of assembly, homodimer.

It carries out the reaction orotidine 5'-phosphate + H(+) = UMP + CO2. Its pathway is pyrimidine metabolism; UMP biosynthesis via de novo pathway; UMP from orotate: step 2/2. Its function is as follows. Catalyzes the decarboxylation of orotidine 5'-monophosphate (OMP) to uridine 5'-monophosphate (UMP). In Alkalilimnicola ehrlichii (strain ATCC BAA-1101 / DSM 17681 / MLHE-1), this protein is Orotidine 5'-phosphate decarboxylase.